A 118-amino-acid chain; its full sequence is Urease subunit beta (118 aa).

Belongs to the urease beta subunit family. Heterotrimer of UreA (gamma), UreB (beta) and UreC (alpha) subunits. Three heterotrimers associate to form the active enzyme.

The protein localises to the cytoplasm. The catalysed reaction is urea + 2 H2O + H(+) = hydrogencarbonate + 2 NH4(+). The protein operates within nitrogen metabolism; urea degradation; CO(2) and NH(3) from urea (urease route): step 1/1. The polypeptide is Urease subunit beta (Aliivibrio fischeri (strain ATCC 700601 / ES114) (Vibrio fischeri)).